We begin with the raw amino-acid sequence, 311 residues long: Porphobilinogen deaminase (311 aa).

Cys-240 carries the S-(dipyrrolylmethanemethyl)cysteine modification.

The protein belongs to the HMBS family. As to quaternary structure, monomer. It depends on dipyrromethane as a cofactor.

The catalysed reaction is 4 porphobilinogen + H2O = hydroxymethylbilane + 4 NH4(+). It participates in porphyrin-containing compound metabolism; protoporphyrin-IX biosynthesis; coproporphyrinogen-III from 5-aminolevulinate: step 2/4. Functionally, tetrapolymerization of the monopyrrole PBG into the hydroxymethylbilane pre-uroporphyrinogen in several discrete steps. This is Porphobilinogen deaminase from Natranaerobius thermophilus (strain ATCC BAA-1301 / DSM 18059 / JW/NM-WN-LF).